A 1969-amino-acid polypeptide reads, in one-letter code: Hybrid signal transduction histidine kinase B (1969 aa).

Residues 1 to 10 (MEKSEQTNSF) show a composition bias toward polar residues. Disordered regions lie at residues 1-91 (MEKS…HETK), 218-335 (KINE…KTKQ), 412-436 (QQQQQHHRHYHHHINSGGSSGSSDK), 468-505 (NNINIQAPSTPVQSRNYPLFTTQSPKNANSASKSKNKL), and 551-598 (GSGG…YNNN). Positions 11–55 (ESSNNNNNNIDSNINNNLENNNNKNNNNNNNNNNNNNNNNNNIEN) are enriched in low complexity. Residues 56–65 (SIDKNNKEDN) are compositionally biased toward basic and acidic residues. The span at 72-86 (SHRKHRTRLKSKKGN) shows a compositional bias: basic residues. Positions 242 to 252 (TNSSILKSSEQ) are enriched in polar residues. Residues 280–292 (SSSSDEGSDNSKS) show a composition bias toward low complexity. Over residues 293–304 (QHSSVNTPTLSR) the composition is skewed to polar residues. A compositionally biased stretch (low complexity) spans 313 to 335 (SQQSQKQSQQQSQQPQQQNKTKQ). The span at 416–425 (QHHRHYHHHI) shows a compositional bias: basic residues. Over residues 469-492 (NINIQAPSTPVQSRNYPLFTTQSP) the composition is skewed to polar residues. Gly residues predominate over residues 551–571 (GSGGGGSGGGGGGGGGGGGIG). Over residues 574-598 (SSFLDDNNNLNNGENFKNSNSYNNN) the composition is skewed to low complexity. Transmembrane regions (helical) follow at residues 660-680 (AYILNFLNLVLFVVYLLSTIL), 684-704 (EWFIFAPGILLSVIYFFLGKI), 708-728 (MYLIAFLTISTAVAINITSII), 747-767 (LVMIMVPLLFPSIVYSIVILI), and 795-815 (FGELLRSIIIVFVILMFYTIL). Residues 967–1188 (TVSHELRTPI…TFSFTIPCGI (222 aa)) form the Histidine kinase domain. At His970 the chain carries Phosphohistidine; by autocatalysis. 4 disordered regions span residues 1359 to 1415 (ASKD…HQLI), 1521 to 1563 (GIAL…TTQS), 1617 to 1709 (NNNF…SSHS), and 1755 to 1832 (QKPQ…TAAA). The segment covering 1373–1398 (GDGGRSLSGGGGGVGSNGNGNGGGGL) has biased composition (gly residues). Low complexity-rich tracts occupy residues 1399–1410 (DSNISPSELSSS) and 1527–1549 (SSSKSPSIPSSSSASASALSPNS). Polar residues-rich tracts occupy residues 1554 to 1563 (ELGNGKTTQS) and 1626 to 1665 (KPSTPTFLSNQPSPATSNSPQLLQSPTTSTTGSINLSPHR). 2 stretches are compositionally biased toward low complexity: residues 1755 to 1774 (QKPQQQQQKPTTTTTTTSTQ) and 1781 to 1821 (KTTT…TTTT). Residues 1840–1967 (KILLVEDNFV…DILIQMIKKH (128 aa)) enclose the Response regulatory domain. Asp1889 is subject to 4-aspartylphosphate.

It localises to the membrane. The catalysed reaction is ATP + protein L-histidine = ADP + protein N-phospho-L-histidine.. Functionally, acts in the cytokinin signal transduction pathway that regulates spore germination. Required for the maintenance of spore dormancy. Does not appear to act as a cytokinin receptor. Probably undergoes ATP-dependent autophosphorylation at a conserved histidine residue in the kinase core, which is followed by transfer of the phosphoryl group to a conserved aspartate residue in the receiver domain. The chain is Hybrid signal transduction histidine kinase B (dhkB) from Dictyostelium discoideum (Social amoeba).